Here is a 192-residue protein sequence, read N- to C-terminus: tRNA (pseudouridine(54)-N(1))-methyltransferase (192 aa).

Residues Leu-114 and Gly-138 each coordinate S-adenosyl-L-methionine.

It belongs to the methyltransferase superfamily. TrmY family. As to quaternary structure, homodimer.

The protein localises to the cytoplasm. It carries out the reaction pseudouridine(54) in tRNA + S-adenosyl-L-methionine = N(1)-methylpseudouridine(54) in tRNA + S-adenosyl-L-homocysteine + H(+). In terms of biological role, specifically catalyzes the N1-methylation of pseudouridine at position 54 (Psi54) in tRNAs. The sequence is that of tRNA (pseudouridine(54)-N(1))-methyltransferase from Aeropyrum pernix (strain ATCC 700893 / DSM 11879 / JCM 9820 / NBRC 100138 / K1).